A 149-amino-acid chain; its full sequence is Transcriptional regulator MraZ (149 aa).

SpoVT-AbrB domains follow at residues 7-54 and 83-126; these read KYVN…GISH and AVQL…QPQN.

It belongs to the MraZ family. As to quaternary structure, forms oligomers.

It is found in the cytoplasm. Its subcellular location is the nucleoid. This chain is Transcriptional regulator MraZ, found in Rickettsia felis (strain ATCC VR-1525 / URRWXCal2) (Rickettsia azadi).